Here is a 373-residue protein sequence, read N- to C-terminus: Glutamine synthetase (373 aa).

Threonine 2 carries the N-acetylthreonine modification. The interval 2–25 (TTSASSHLNKGIKQVYMSLPQGEK) is required for glutamine-induced ubiquitination by CRL4(CRBN) and proteasomal degradation. An N6-acetyllysine; by EP300 mark is found at lysine 11 and lysine 14. In terms of domain architecture, GS beta-grasp spans 24–106 (EKVQAMYIWI…VLCEVFKYNR (83 aa)). The residue at position 104 (tyrosine 104) is a Phosphotyrosine. The GS catalytic domain maps to 113–373 (LRHTCKRIMD…TGDEPFQYKN (261 aa)). Glutamate 134 is an ATP binding site. 4 residues coordinate Mn(2+): glutamate 134, glutamate 136, glutamate 196, and glutamate 203. 203-208 (EFQIGP) is a binding site for ATP. 246-247 (NW) is a binding site for L-glutamate. Position 253 (histidine 253) interacts with Mn(2+). ATP-binding positions include 255–257 (NFS), arginine 319, and arginine 324. Arginine 319 is an L-glutamate binding site. 336–338 (YFE) provides a ligand contact to ADP. Glutamate 338 is a Mn(2+) binding site. L-glutamate is bound at residue arginine 340. Phosphoserine is present on serine 343.

This sequence belongs to the glutamine synthetase family. Decamer; composed of two pentamers. Interacts with PALMD. Interacts with RHOJ. Interacts with BEST2; this interaction tethers a fraction of GLUL to the membrane, causing a decrease of cytosolic glutamine synthase (GS) activity and inhibits the chloride channel activity of BEST2 by affecting the gating at the aperture in the absence of intracellular glutamate. Mg(2+) is required as a cofactor. Requires Mn(2+) as cofactor. In terms of processing, acetylated by EP300/p300; acetylation is stimulated by increased glutamine levels and promotes ubiquitin-mediated proteasomal degradation. Palmitoylated; undergoes autopalmitoylation. Post-translationally, ubiquitinated by ZNRF1. Ubiquitinated by the DCX (DDB1-CUL4-X-box) E3 ubiquitin-protein ligase complex called CRL4(CRBN), leading to proteasomal degradation. As to expression, expressed in endothelial cells.

Its subcellular location is the cytoplasm. It localises to the cytosol. The protein resides in the microsome. It is found in the mitochondrion. The protein localises to the cell membrane. It catalyses the reaction L-glutamate + NH4(+) + ATP = L-glutamine + ADP + phosphate + H(+). The catalysed reaction is L-cysteinyl-[protein] + hexadecanoyl-CoA = S-hexadecanoyl-L-cysteinyl-[protein] + CoA. Glutamine synthetase activity is inhibited by methionine sulfoximine (MSO). Its function is as follows. Glutamine synthetase that catalyzes the ATP-dependent conversion of glutamate and ammonia to glutamine. Its role depends on tissue localization: in the brain, it regulates the levels of toxic ammonia and converts neurotoxic glutamate to harmless glutamine, whereas in the liver, it is one of the enzymes responsible for the removal of ammonia. Plays a key role in ammonium detoxification during erythropoiesis: the glutamine synthetase activity is required to remove ammonium generated by porphobilinogen deaminase (HMBS) during heme biosynthesis to prevent ammonium accumulation and oxidative stress. Essential for proliferation of fetal skin fibroblasts. Independently of its glutamine synthetase activity, required for endothelial cell migration during vascular development: acts by regulating membrane localization and activation of the GTPase RHOJ, possibly by promoting RHOJ palmitoylation. May act as a palmitoyltransferase for RHOJ: able to autopalmitoylate and then transfer the palmitoyl group to RHOJ. Plays a role in ribosomal 40S subunit biogenesis. Through the interaction with BEST2, inhibits BEST2 channel activity by affecting the gating at the aperture in the absence of intracellular L-glutamate, but sensitizes BEST2 to intracellular L-glutamate, which promotes the opening of BEST2 and thus relieves its inhibitory effect on BEST2. In Homo sapiens (Human), this protein is Glutamine synthetase.